We begin with the raw amino-acid sequence, 957 residues long: Glycine dehydrogenase (decarboxylating) (957 aa).

Lys-708 is subject to N6-(pyridoxal phosphate)lysine.

This sequence belongs to the GcvP family. In terms of assembly, the glycine cleavage system is composed of four proteins: P, T, L and H. Pyridoxal 5'-phosphate serves as cofactor.

It catalyses the reaction N(6)-[(R)-lipoyl]-L-lysyl-[glycine-cleavage complex H protein] + glycine + H(+) = N(6)-[(R)-S(8)-aminomethyldihydrolipoyl]-L-lysyl-[glycine-cleavage complex H protein] + CO2. Functionally, the glycine cleavage system catalyzes the degradation of glycine. The P protein binds the alpha-amino group of glycine through its pyridoxal phosphate cofactor; CO(2) is released and the remaining methylamine moiety is then transferred to the lipoamide cofactor of the H protein. The protein is Glycine dehydrogenase (decarboxylating) of Escherichia coli O17:K52:H18 (strain UMN026 / ExPEC).